The sequence spans 666 residues: MFMYPEFARKALSKLISKKLNIEKVSSKHQLVLLDYGLHGLLPKSLYLEAINSDILNVRFFPPEIINVTDIVKALQNSCRVDEYLKAVSLYHKNSLMVSGPNVVKLMIEYNLLTHSDLEWLINENVVKATYLLKINAYMINFKIDLTVDEIIDLVKDIPVGATLHLYNILNNIDLDIVLRISDEYNIPPVHDILSKLTDEEMCIKLVTKYPMDNVINFINQDVRYSPTFIKTIKDFVNKHLPTMYDGLNDYLHSVIIDEDLIEEYKIKSVAMFNLEYKTDVDTLTLDEQIFVEVNISYYDFRYRQFADEFRDYIMIKERRQITMQSGDRIRRFRRPMSLRSTIIKKDTDSLEDILAHIDNARKNSKVSIEDVERIISSFRLNPCVVRRTMLSDIDIKTKIMVLKIVKDWKSCALTLSAIKGIMVTDTINTVLSKILHHHRNVFKYLTSVENKEIAVCNCSRCLSLFYRELKSVRCDLRTDDGLLDRLYDLTRYALHGKINQNLIGQRCWGPLTEMLFNENKKKKLNNLMEYIKISDMLVYGHSIEKTLIPITDSLSFKLSVDTMSVLNDQYAKIVIFFNTIIEYIIATIYYRLTVLNNYTNVKHFVSKVLHTVMEACGVLFSYIKVNDKIEHELEEMVDKGTVPSYLYHLSINVISIILDDINGTR.

Residues 574–596 traverse the membrane as a helical segment; that stretch reads IVIFFNTIIEYIIATIYYRLTVL.

It belongs to the orthopoxvirus OPG074 family.

The protein localises to the membrane. In Homo sapiens (Human), this protein is Protein OPG074 (OPG074).